The sequence spans 507 residues: ATP synthase subunit alpha (507 aa).

ATP is bound at residue 170–177; the sequence is GDRQTGKT.

This sequence belongs to the ATPase alpha/beta chains family. F-type ATPases have 2 components, CF(1) - the catalytic core - and CF(0) - the membrane proton channel. CF(1) has five subunits: alpha(3), beta(3), gamma(1), delta(1), epsilon(1). CF(0) has three main subunits: a(1), b(2) and c(9-12). The alpha and beta chains form an alternating ring which encloses part of the gamma chain. CF(1) is attached to CF(0) by a central stalk formed by the gamma and epsilon chains, while a peripheral stalk is formed by the delta and b chains.

It localises to the cell inner membrane. It catalyses the reaction ATP + H2O + 4 H(+)(in) = ADP + phosphate + 5 H(+)(out). Functionally, produces ATP from ADP in the presence of a proton gradient across the membrane. The alpha chain is a regulatory subunit. This chain is ATP synthase subunit alpha, found in Thermosipho melanesiensis (strain DSM 12029 / CIP 104789 / BI429).